Consider the following 54-residue polypeptide: UPF0391 membrane protein Mpe_A2904 (54 aa).

A run of 2 helical transmembrane segments spans residues 5–25 (AVVFFIIALIAAVFGFGGIAA) and 30–50 (IAKILFFVFVVLAVASFLFGL).

Belongs to the UPF0391 family.

It localises to the cell membrane. This Methylibium petroleiphilum (strain ATCC BAA-1232 / LMG 22953 / PM1) protein is UPF0391 membrane protein Mpe_A2904.